A 345-amino-acid polypeptide reads, in one-letter code: N-acetyl-gamma-glutamyl-phosphate reductase (345 aa).

Residue cysteine 149 is part of the active site.

It belongs to the NAGSA dehydrogenase family. Type 1 subfamily.

The protein localises to the cytoplasm. The catalysed reaction is N-acetyl-L-glutamate 5-semialdehyde + phosphate + NADP(+) = N-acetyl-L-glutamyl 5-phosphate + NADPH + H(+). It participates in amino-acid biosynthesis; L-arginine biosynthesis; N(2)-acetyl-L-ornithine from L-glutamate: step 3/4. In terms of biological role, catalyzes the NADPH-dependent reduction of N-acetyl-5-glutamyl phosphate to yield N-acetyl-L-glutamate 5-semialdehyde. This Bacillus mycoides (strain KBAB4) (Bacillus weihenstephanensis) protein is N-acetyl-gamma-glutamyl-phosphate reductase.